Here is a 504-residue protein sequence, read N- to C-terminus: Doublesex- and mab-3-related transcription factor A1 (504 aa).

Positions 1 to 13 are enriched in basic and acidic residues; sequence MERSQCGSRDRGV. A disordered region spans residues 1-27; sequence MERSQCGSRDRGVSGRPHLAPGLVVAA. A DNA-binding region (DM) is located at residues 97–144; it reads CARCRNHGVVSALKGHKRFCRWRDCACAKCTLIAERQRVMAAQVALRR. 2 disordered regions span residues 170 to 192 and 266 to 307; these read GRASGGGGRAENPQSTGGPAAGA and SISE…NESE. A compositionally biased stretch (low complexity) spans 293–306; the sequence is RSLSSSDLESGNES. One can recognise a DMA domain in the interval 327-362; sequence RDPLDILTKIFPNYRRSRLEGILRFCKGDVVQAIEQ.

The protein belongs to the DMRT family. As to expression, expressed in liver, kidney, pancreas, prostate and weakly detected in testis and ovary.

It is found in the nucleus. The chain is Doublesex- and mab-3-related transcription factor A1 (DMRTA1) from Homo sapiens (Human).